The chain runs to 257 residues: Ribosome maturation factor RimP (257 aa).

Positions 182–257 are disordered; that stretch reads LRRGGPPAAD…SRLKDRDSLH (76 aa). Acidic residues predominate over residues 191-205; sequence DEADEAEEAEDEEVA. Over residues 224–236 the composition is skewed to low complexity; it reads KASPAAKPQKQAR.

This sequence belongs to the RimP family.

The protein resides in the cytoplasm. Functionally, required for maturation of 30S ribosomal subunits. This Methylobacterium radiotolerans (strain ATCC 27329 / DSM 1819 / JCM 2831 / NBRC 15690 / NCIMB 10815 / 0-1) protein is Ribosome maturation factor RimP.